Reading from the N-terminus, the 411-residue chain is Cladofulvin cluster transcriptional coactivator claA (411 aa).

The span at 1 to 27 shows a compositional bias: polar residues; it reads MSDSLAGNGMRQNLNRSSTSSNHTGHA. The tract at residues 1–32 is disordered; the sequence is MSDSLAGNGMRQNLNRSSTSSNHTGHAQNGRA. Residues 47-117 enclose the HTH iclR-type domain; that stretch reads LACQVQSLAC…DPGHIAHTAL (71 aa). Residues 77-96 constitute a DNA-binding region (H-T-H motif); that stretch reads LHDVAELANVPASQLSRVVR.

The protein resides in the nucleus. Its function is as follows. Transcriptional coactivator; part of the gene cluster that mediates the biosynthesis of cladofulvin, a conidial pigment not required for virulence but that plays a role in fitness and resistance to environmental stresses including UV light and low-temperature stress. With claE, coregulates the production of cladofulvin. The sequence is that of Cladofulvin cluster transcriptional coactivator claA from Passalora fulva (Tomato leaf mold).